A 343-amino-acid polypeptide reads, in one-letter code: Holliday junction branch migration complex subunit RuvB (343 aa).

The segment at 1 to 23 is disordered; that stretch reads MSDDFEVVRPEEQAGDEKDRDLR. The large ATPase domain (RuvB-L) stretch occupies residues 1–183; that stretch reads MSDDFEVVRP…FGIVQRFEFY (183 aa). Residues Leu-22, Arg-23, Gly-64, Lys-67, Thr-68, Thr-69, 130 to 132, Arg-173, Tyr-183, and Arg-220 contribute to the ATP site; that span reads EDY. Thr-68 lines the Mg(2+) pocket. A small ATPAse domain (RuvB-S) region spans residues 184 to 254; that stretch reads SHEELASIIS…TVAAGLKQLN (71 aa). The interval 257-343 is head domain (RuvB-H); it reads GLGLETYDRQ…LGDGQEGLFD (87 aa). DNA-binding residues include Arg-312 and Arg-317.

The protein belongs to the RuvB family. In terms of assembly, homohexamer. Forms an RuvA(8)-RuvB(12)-Holliday junction (HJ) complex. HJ DNA is sandwiched between 2 RuvA tetramers; dsDNA enters through RuvA and exits via RuvB. An RuvB hexamer assembles on each DNA strand where it exits the tetramer. Each RuvB hexamer is contacted by two RuvA subunits (via domain III) on 2 adjacent RuvB subunits; this complex drives branch migration. In the full resolvosome a probable DNA-RuvA(4)-RuvB(12)-RuvC(2) complex forms which resolves the HJ.

The protein localises to the cytoplasm. The enzyme catalyses ATP + H2O = ADP + phosphate + H(+). Functionally, the RuvA-RuvB-RuvC complex processes Holliday junction (HJ) DNA during genetic recombination and DNA repair, while the RuvA-RuvB complex plays an important role in the rescue of blocked DNA replication forks via replication fork reversal (RFR). RuvA specifically binds to HJ cruciform DNA, conferring on it an open structure. The RuvB hexamer acts as an ATP-dependent pump, pulling dsDNA into and through the RuvAB complex. RuvB forms 2 homohexamers on either side of HJ DNA bound by 1 or 2 RuvA tetramers; 4 subunits per hexamer contact DNA at a time. Coordinated motions by a converter formed by DNA-disengaged RuvB subunits stimulates ATP hydrolysis and nucleotide exchange. Immobilization of the converter enables RuvB to convert the ATP-contained energy into a lever motion, pulling 2 nucleotides of DNA out of the RuvA tetramer per ATP hydrolyzed, thus driving DNA branch migration. The RuvB motors rotate together with the DNA substrate, which together with the progressing nucleotide cycle form the mechanistic basis for DNA recombination by continuous HJ branch migration. Branch migration allows RuvC to scan DNA until it finds its consensus sequence, where it cleaves and resolves cruciform DNA. The sequence is that of Holliday junction branch migration complex subunit RuvB from Treponema denticola (strain ATCC 35405 / DSM 14222 / CIP 103919 / JCM 8153 / KCTC 15104).